The following is a 230-amino-acid chain: Type II restriction enzyme Eco47I (230 aa).

It carries out the reaction Endonucleolytic cleavage of DNA to give specific double-stranded fragments with terminal 5'-phosphates.. A P subtype restriction enzyme that recognizes the double-stranded sequence 5'-GGWCC-3' and cleaves after G-1. This is Type II restriction enzyme Eco47I from Escherichia coli.